A 181-amino-acid chain; its full sequence is Caveolin-1 (181 aa).

Residues 1 to 107 are Cytoplasmic-facing; that stretch reads MTGGLRDGEK…TKYWCYRLLT (107 aa). An intramembrane region (helical) is located at residues 108-128; it reads ALVGIPLALIWGIFFAILSFI. Residues 129–181 are Cytoplasmic-facing; sequence HIWAVVPCVKSYLIEIHCISRVYSICVHTFCDPLFEAMGKCLGGVRIRTSKEV. 3 S-palmitoyl cysteine lipidation sites follow: Cys136, Cys146, and Cys159.

The protein belongs to the caveolin family. As to quaternary structure, homooligomer.

The protein localises to the golgi apparatus membrane. Its subcellular location is the cell membrane. The protein resides in the membrane. It localises to the caveola. It is found in the membrane raft. In terms of biological role, may act as a positive regulator of T-cell coactivation. May act as a scaffolding protein within caveolar membranes. Interacts directly with G-protein alpha subunits and can functionally regulate their activity. This is Caveolin-1 (cav1) from Takifugu rubripes (Japanese pufferfish).